Here is a 122-residue protein sequence, read N- to C-terminus: MARPIYVRFDVPPELASKSLEALELARDTGRIKKGTNEATKAVERGVAKLVIIGEDVEPPEIVAHLPPLCEEKNTPYVYVKKQSDVGAAAGLSVKSAAAAIIEPGKGKELLEEIIQKLQALK.

The protein belongs to the eukaryotic ribosomal protein eL8 family. Part of the 50S ribosomal subunit. Probably part of the RNase P complex.

It localises to the cytoplasm. Its function is as follows. Multifunctional RNA-binding protein that recognizes the K-turn motif in ribosomal RNA, the RNA component of RNase P, box H/ACA, box C/D and box C'/D' sRNAs. This Methanothrix thermoacetophila (strain DSM 6194 / JCM 14653 / NBRC 101360 / PT) (Methanosaeta thermophila) protein is Large ribosomal subunit protein eL8.